A 107-amino-acid chain; its full sequence is Small polypeptide DEVIL 9 (107 aa).

Residues 1-12 (MDEKWRLSKKDA) are compositionally biased toward basic and acidic residues. A disordered region spans residues 1–79 (MDEKWRLSKK…EKGSITQKYS (79 aa)). A helical transmembrane segment spans residues 9 to 29 (KKDALAASCSSSSTSSKSKFS). Residues 13-65 (LAASCSSSSTSSKSKFSRSFSTSASSSKAPAFVRSSSTKCSVPSSSSSSISRS) show a composition bias toward low complexity. The interval 73–104 (SITQKYSSLAKEQKGRFYIMRRCVAMLVCWHK) is required for DVL/RTFL small polypeptide activity.

It belongs to the DVL/RTFL small polypeptides family.

Its subcellular location is the cell membrane. Small polypeptide acting as a regulatory molecule which coordinates cellular responses required for differentiation, growth and development, probably by restricting polar cell proliferation in lateral organs and coordinating socket cell recruitment and differentiation at trichome sites. The polypeptide is Small polypeptide DEVIL 9 (Arabidopsis thaliana (Mouse-ear cress)).